Consider the following 97-residue polypeptide: Large ribosomal subunit protein eL21 (97 aa).

This sequence belongs to the eukaryotic ribosomal protein eL21 family.

This is Large ribosomal subunit protein eL21 (rpl21e) from Archaeoglobus fulgidus (strain ATCC 49558 / DSM 4304 / JCM 9628 / NBRC 100126 / VC-16).